The primary structure comprises 891 residues: DNA mismatch repair protein MutS (891 aa).

Residue 634–641 (GPNMGGKS) participates in ATP binding.

This sequence belongs to the DNA mismatch repair MutS family.

This protein is involved in the repair of mismatches in DNA. It is possible that it carries out the mismatch recognition step. This protein has a weak ATPase activity. This is DNA mismatch repair protein MutS from Burkholderia mallei (strain NCTC 10247).